The following is a 121-amino-acid chain: Small ribosomal subunit protein uS13 (121 aa).

Positions 91–121 are disordered; the sequence is HRRGLPVRGQKTKNNARTRKGPVKTVANKKK.

Belongs to the universal ribosomal protein uS13 family. As to quaternary structure, part of the 30S ribosomal subunit. Forms a loose heterodimer with protein S19. Forms two bridges to the 50S subunit in the 70S ribosome.

Its function is as follows. Located at the top of the head of the 30S subunit, it contacts several helices of the 16S rRNA. In the 70S ribosome it contacts the 23S rRNA (bridge B1a) and protein L5 of the 50S subunit (bridge B1b), connecting the 2 subunits; these bridges are implicated in subunit movement. Contacts the tRNAs in the A and P-sites. This chain is Small ribosomal subunit protein uS13, found in Staphylococcus haemolyticus (strain JCSC1435).